The following is a 340-amino-acid chain: N-acetyl-gamma-glutamyl-phosphate reductase (340 aa).

Residue C149 is part of the active site.

Belongs to the NAGSA dehydrogenase family. Type 1 subfamily.

Its subcellular location is the cytoplasm. The catalysed reaction is N-acetyl-L-glutamate 5-semialdehyde + phosphate + NADP(+) = N-acetyl-L-glutamyl 5-phosphate + NADPH + H(+). It participates in amino-acid biosynthesis; L-arginine biosynthesis; N(2)-acetyl-L-ornithine from L-glutamate: step 3/4. Its function is as follows. Catalyzes the NADPH-dependent reduction of N-acetyl-5-glutamyl phosphate to yield N-acetyl-L-glutamate 5-semialdehyde. The chain is N-acetyl-gamma-glutamyl-phosphate reductase from Vesicomyosocius okutanii subsp. Calyptogena okutanii (strain HA).